We begin with the raw amino-acid sequence, 156 residues long: Ribosomal RNA large subunit methyltransferase H (156 aa).

Residues leucine 73, glycine 104, and leucine 123–leucine 128 contribute to the S-adenosyl-L-methionine site.

It belongs to the RNA methyltransferase RlmH family. In terms of assembly, homodimer.

It is found in the cytoplasm. It carries out the reaction pseudouridine(1915) in 23S rRNA + S-adenosyl-L-methionine = N(3)-methylpseudouridine(1915) in 23S rRNA + S-adenosyl-L-homocysteine + H(+). Functionally, specifically methylates the pseudouridine at position 1915 (m3Psi1915) in 23S rRNA. In Shewanella sp. (strain ANA-3), this protein is Ribosomal RNA large subunit methyltransferase H.